The primary structure comprises 259 residues: Short chain dehydrogenase ausX (259 aa).

Positions 13, 59, 121, 153, 157, and 186 each coordinate NADP(+). Catalysis depends on tyrosine 153, which acts as the Proton acceptor. Tyrosine 153 (proton donor) is an active-site residue. The Lowers pKa of active site Tyr role is filled by lysine 157.

Belongs to the short-chain dehydrogenases/reductases (SDR) family.

The protein operates within secondary metabolite biosynthesis; terpenoid biosynthesis. Functionally, short chain dehydrogenase; part of the gene cluster A that mediates the biosynthesis of the fungal meroterpenoid acetoxydehydroaustin. The first step of the pathway is the synthesis of 3,5-dimethylorsellinic acid by the polyketide synthase ausA. 3,5-dimethylorsellinic acid is then prenylated by the polyprenyl transferase ausN. Further epoxidation by the FAD-dependent monooxygenase ausM and cyclization by the probable terpene cyclase ausL lead to the formation of protoaustinoid A. Protoaustinoid A is then oxidized to spiro-lactone preaustinoid A3 by the combined action of the FAD-binding monooxygenases ausB and ausC, and the dioxygenase ausE. Acid-catalyzed keto-rearrangement and ring contraction of the tetraketide portion of preaustinoid A3 by ausJ lead to the formation of preaustinoid A4. The aldo-keto reductase ausK, with the help of ausH, is involved in the next step by transforming preaustinoid A4 into isoaustinone which is in turn hydroxylated by the P450 monooxygenase ausI to form austinolide. The cytochrome P450 monooxygenase ausG then modifies austinolide to austinol. Austinol is further acetylated to austin by the O-acetyltransferase ausP, which spontaneously changes to dehydroaustin. The cytochrome P450 monooxygenase then converts dehydroaustin is into 7-dehydrodehydroaustin. The hydroxylation catalyzed by ausR permits the second O-acetyltransferase ausQ to add an additional acetyl group to the molecule, leading to the formation of acetoxydehydroaustin. Due to genetic rearrangements of the clusters and the subsequent loss of some enzymes, the end product of the Penicillium brasilianum austinoid biosynthesis clusters is acetoxydehydroaustin. The chain is Short chain dehydrogenase ausX from Penicillium brasilianum.